The following is a 370-amino-acid chain: MKYILIKLSIVMIFIINSASKAERIRDLTTIVGVRDNVLIGYGLVVGLDGTGDQTTQTPFTIQSLRNMLSQLGVSIPSGINMQLKNIAAVMVTAKLPPFVKIGQKIDVMVSSLGSAKSLRGGTLLITPLKGVDNQIYALAQGNILVSGFGAQSGGNTSQVNQLNGGRISEGAIIEKSIKTDFDKREIITLQLNNNDFSLAQQISDAINTYFGKKSAYPTDSRTINVILSASYDKSEKVKFIARLQNIPIIIGPSDAIIVINSRTGSVVINKEVMLNSCAVAHGELTVEIKKRTKVNQPNTILGGGSTVVTPETEILIKNQGDSLQEISSSTNLNEVISSLNSIGAKPNDLMAILESMKSAGCLNAKLEIN.

A signal peptide spans 1-21; the sequence is MKYILIKLSIVMIFIINSASK.

The protein belongs to the FlgI family. The basal body constitutes a major portion of the flagellar organelle and consists of four rings (L,P,S, and M) mounted on a central rod.

It is found in the bacterial flagellum basal body. Assembles around the rod to form the L-ring and probably protects the motor/basal body from shearing forces during rotation. The protein is Flagellar P-ring protein of Wigglesworthia glossinidia brevipalpis.